The sequence spans 223 residues: Cytidylate kinase (223 aa).

10-18 lines the ATP pocket; it reads GPASSGKST.

Belongs to the cytidylate kinase family. Type 1 subfamily.

It localises to the cytoplasm. It carries out the reaction CMP + ATP = CDP + ADP. It catalyses the reaction dCMP + ATP = dCDP + ADP. This is Cytidylate kinase from Streptococcus pneumoniae (strain Taiwan19F-14).